The following is a 260-amino-acid chain: Large ribosomal subunit protein uL2 (260 aa).

The tract at residues Met-1–Lys-24 is disordered.

Belongs to the universal ribosomal protein uL2 family.

The protein localises to the cytoplasm. The polypeptide is Large ribosomal subunit protein uL2 (RPL8) (Solanum lycopersicum (Tomato)).